A 351-amino-acid polypeptide reads, in one-letter code: UDP-3-O-acylglucosamine N-acyltransferase 1 (351 aa).

Residue His-237 is the Proton acceptor of the active site.

Belongs to the transferase hexapeptide repeat family. LpxD subfamily. As to quaternary structure, homotrimer.

The enzyme catalyses a UDP-3-O-[(3R)-3-hydroxyacyl]-alpha-D-glucosamine + a (3R)-hydroxyacyl-[ACP] = a UDP-2-N,3-O-bis[(3R)-3-hydroxyacyl]-alpha-D-glucosamine + holo-[ACP] + H(+). It participates in bacterial outer membrane biogenesis; LPS lipid A biosynthesis. Its function is as follows. Catalyzes the N-acylation of UDP-3-O-acylglucosamine using 3-hydroxyacyl-ACP as the acyl donor. Is involved in the biosynthesis of lipid A, a phosphorylated glycolipid that anchors the lipopolysaccharide to the outer membrane of the cell. This chain is UDP-3-O-acylglucosamine N-acyltransferase 1, found in Legionella pneumophila (strain Paris).